We begin with the raw amino-acid sequence, 167 residues long: Phosphorelay intermediate protein YPD1 (167 aa).

Residues 24-129 (DSDFSKGLII…DDEEIKIQVD (106 aa)) form the HPt domain. His64 bears the Phosphohistidine mark.

This sequence belongs to the YPD1 family. Interacts with the response regulatory domains of SLN1 and SSK1. The phosphorelay mechanism involves the sequential transfer of a phosphate group from 'His-576' (H1) to 'Asp-1144' (D1) of SLN1, then to His-64 (H2) of YPD1 and finally to 'Asp-554' (D2) of SSK1 or 'Asp-427' (D2) of SKN7.

The protein resides in the cytoplasm. It localises to the nucleus. Its function is as follows. Phosphorelay intermediate protein that is part of the branched SLN1-YPD1-SKN7/SSK1 two-component regulatory system, which controls activity of the HOG1 pathway and gene expression in response to changes in the osmolarity of the extracellular environment. Catalyzes the phosphoryl group transfer from the membrane-bound osmosensing histidine kinase SLN1 to two distinct response regulator proteins, SSK1 in the cytoplasm, and transcription factor SKN7 in the nucleus. The sequence is that of Phosphorelay intermediate protein YPD1 (YPD1) from Saccharomyces cerevisiae (strain ATCC 204508 / S288c) (Baker's yeast).